Reading from the N-terminus, the 139-residue chain is MANFKVVVSDPKEGRAYQIDVKDAEANALIGKSIGDVVDGAVFGLSGYKVKITGGCDGSGFVMKPDLLGPRRQRILMAVGVGYTPKHPGQRRRKMVRGKEVAPDIVQINAKVVEYGSKSIKALLGLEAPAEAPAEAPAE.

The protein belongs to the eukaryotic ribosomal protein eS6 family.

The sequence is that of Small ribosomal subunit protein eS6 from Methanosarcina barkeri (strain Fusaro / DSM 804).